We begin with the raw amino-acid sequence, 595 residues long: METITVFGPKHGSPLSLPSRTNMCWEMKPSRFPLTSVRGKPAKQVGLKVSASCDRPISKLPPSKWTNYFHSVLVDVSEMDVLEREIEALKPNVREMLMSSKGYDSVKKRSLMIYLLVSLGLAYHFEEEIEKSLKDGFEKIDEIIAGEDDLYTISTIFWVFRTYGYNMSSDVFRRFKEENGKFKESLIEDARGMLSLYEAAHLGTTTDYILDEALDFASNNLVSLAEDGMCPSHLSTHIRNALSISQHWNMEIIVAVQYIRFYEQEVGHDEMLLKFAKLNFNLVQRLYLQEVKILTKWYKDQDIHSKLPPYYRPVVTEMHFFSTATFFEPQFSHARILQTKLFMAELLVDDTCDRYATFSEVESLINSLQRWAPDDAMDTHPDYLKVVFKFILNAFEECEKELRPQGRSYSLEQTKEEYKRFAKSNLDLAKLAQAGNVPSFEEYMEVGKDEIGAFVIVAGSLMGMDNIDAVEAYDFLKSRSKFSQSSAEIVRYLNDLAGFEDDMRRGCVSTGLNCYMNQYGVTETEVFREFRKMVMNTCKIMNEEFLKTTDVPLRVLKTNFSCVRSGFVGYNEGEGVTYPEGKITKYLTSLYVDQI.

Residues D349, D353, N494, and D502 each coordinate Mg(2+). A DDXXD motif motif is present at residues 349-353 (DDTCD).

It belongs to the terpene synthase family. Tpsa subfamily. Requires Mg(2+) as cofactor. It depends on Mn(2+) as a cofactor.

It is found in the cytoplasm. It functions in the pathway secondary metabolite biosynthesis; terpenoid biosynthesis. The chain is Putative terpenoid synthase 16 (TPS16) from Arabidopsis thaliana (Mouse-ear cress).